A 195-amino-acid polypeptide reads, in one-letter code: Probable molybdenum cofactor guanylyltransferase (195 aa).

Residues 8–10 (LSG), K20, D65, and D96 each bind GTP. D96 is a binding site for Mg(2+).

Belongs to the MobA family. It depends on Mg(2+) as a cofactor.

The protein resides in the cytoplasm. It carries out the reaction Mo-molybdopterin + GTP + H(+) = Mo-molybdopterin guanine dinucleotide + diphosphate. Its function is as follows. Transfers a GMP moiety from GTP to Mo-molybdopterin (Mo-MPT) cofactor (Moco or molybdenum cofactor) to form Mo-molybdopterin guanine dinucleotide (Mo-MGD) cofactor. The protein is Probable molybdenum cofactor guanylyltransferase of Bacillus licheniformis (strain ATCC 14580 / DSM 13 / JCM 2505 / CCUG 7422 / NBRC 12200 / NCIMB 9375 / NCTC 10341 / NRRL NRS-1264 / Gibson 46).